The following is a 233-amino-acid chain: MIAYAIGLLGLLIASIQDIKSREIENYIWIGMAVIGLLLSTYLSFTTGNFMPIISSISGFIICFIIGYLMFVLGIGGADGKILMGMGALIPSYAFPVYSSLQPLYTMEYIPWFPLLVFFNGVILMIVLPIYLFFKNLSNGVKPKKLKEYVLMLVGEYITVAEAKKGNKVVLGKGKDVKLIPSVNDDKNYDLSKYKDTQYVWATPELPLLVPIALSYIITPFLGDKILSIILPM.

Met1 is a topological domain (cytoplasmic). A helical transmembrane segment spans residues 2-18 (IAYAIGLLGLLIASIQD). The Extracellular segment spans residues 19–23 (IKSRE). The chain crosses the membrane as a helical span at residues 24-46 (IENYIWIGMAVIGLLLSTYLSFT). Residues 47-49 (TGN) are Cytoplasmic-facing. A helical membrane pass occupies residues 50-72 (FMPIISSISGFIICFIIGYLMFV). Residues 73–78 (LGIGGA) are Extracellular-facing. Residues 79 to 89 (DGKILMGMGAL) form a helical membrane-spanning segment. At 90–110 (IPSYAFPVYSSLQPLYTMEYI) the chain is on the cytoplasmic side. A helical transmembrane segment spans residues 111-139 (PWFPLLVFFNGVILMIVLPIYLFFKNLSN). Over 140 to 207 (GVKPKKLKEY…QYVWATPELP (68 aa)) the chain is Extracellular. A helical transmembrane segment spans residues 208 to 219 (LLVPIALSYIIT). Topologically, residues 220–233 (PFLGDKILSIILPM) are cytoplasmic.

Belongs to the peptidase A24 family. Archaeal preflagellin peptidase subfamily.

Its subcellular location is the cell membrane. The catalysed reaction is Cleaves the signal peptide of 3 to 12 amino acids from the N-terminal of preflagellin, usually at Arg-Gly-|- or Lys-Gly-|-, to release flagellin.. Its function is as follows. Cleaves the N-terminal leader peptide from preflagellins. The processing of preflagellins is necessary for assembly of flagellins into a flagellum structure. The chain is Preflagellin peptidase (flaK) from Methanococcus voltae.